The chain runs to 199 residues: Protein CPL1 (199 aa).

The N-terminal stretch at 1 to 30 (MFSIPPSVRRLVFLFLIAAPLLSIVLPVAA) is a signal peptide. The interval 34-58 (GVDPPSKLQPRAPQPSRRMGATKRS) is disordered. Residue asparagine 148 is glycosylated (N-linked (GlcNAc...) asparagine).

The protein localises to the secreted. Its function is as follows. Virulence factor which promotes fungal virulence by enhancing type 2 inflammation in the mouse host. Likely binds mouse Tlr4 independently of Ly96/Md2 and activates Tlr4 signaling to drive Stat3 phosphorylation in interstitial macrophages, which promotes the initial induction of Arg1/arginase-1 and increases macrophage sensitivity to Il4 signaling. The protein is Protein CPL1 of Cryptococcus neoformans var. grubii serotype A (strain H99 / ATCC 208821 / CBS 10515 / FGSC 9487) (Filobasidiella neoformans var. grubii).